Here is a 201-residue protein sequence, read N- to C-terminus: Probable nicotinate-nucleotide adenylyltransferase (201 aa).

It belongs to the NadD family.

The enzyme catalyses nicotinate beta-D-ribonucleotide + ATP + H(+) = deamido-NAD(+) + diphosphate. The protein operates within cofactor biosynthesis; NAD(+) biosynthesis; deamido-NAD(+) from nicotinate D-ribonucleotide: step 1/1. In terms of biological role, catalyzes the reversible adenylation of nicotinate mononucleotide (NaMN) to nicotinic acid adenine dinucleotide (NaAD). The chain is Probable nicotinate-nucleotide adenylyltransferase from Neisseria meningitidis serogroup C / serotype 2a (strain ATCC 700532 / DSM 15464 / FAM18).